Reading from the N-terminus, the 462-residue chain is MAVSLWQQCIGRLQDELSAQQFSMWIRPLQAQMDGDTLVLYAPNRFVLDWVRDKYINIINQFFTEQMGSDAPKLRFDIGSRPSAPRPVQATAAVERPKFEQNTKPAKTSFNVNSPEPAMAANHRSNINRTYQFENFVEGKSNQLGKAAAMQVAENPGGAYNPLFLYGGTGLGKTHLLHAVGNGIIKNNPNAKVVYMHSERFVQDMVKALQNNAIEEFKRYYRSVDALFIDDIQFFANKDRSQEEFFHTFNALLEGNHQIILTSDKYPKEIDGVEDRLKSRFGWGLTVAIEPPELETRVAILMRKAQESGINLPDEVAFFIAKRLRSNVRELEGALNRVIANANFTGRPITIDFVREALRDLLALQEKLVTIDNIQKTVAEYYKIKMADMLSKRRSRSVARPRQVAMALSKELTNHSLPEIGDAFGGRDHTTVLHACRKIAQLREESHDTKEDYANLIRTLSS.

Residues Met1–Ala84 form a domain I, interacts with DnaA modulators region. The domain II stretch occupies residues Ala84–Ser125. The interval Asn126–Ala342 is domain III, AAA+ region. ATP-binding residues include Gly170, Gly172, Lys173, and Thr174. The interval Asn343 to Ser462 is domain IV, binds dsDNA.

It belongs to the DnaA family. As to quaternary structure, oligomerizes as a right-handed, spiral filament on DNA at oriC.

The protein localises to the cytoplasm. Functionally, plays an essential role in the initiation and regulation of chromosomal replication. ATP-DnaA binds to the origin of replication (oriC) to initiate formation of the DNA replication initiation complex once per cell cycle. Binds the DnaA box (a 9 base pair repeat at the origin) and separates the double-stranded (ds)DNA. Forms a right-handed helical filament on oriC DNA; dsDNA binds to the exterior of the filament while single-stranded (ss)DNA is stabiized in the filament's interior. The ATP-DnaA-oriC complex binds and stabilizes one strand of the AT-rich DNA unwinding element (DUE), permitting loading of DNA polymerase. After initiation quickly degrades to an ADP-DnaA complex that is not apt for DNA replication. Binds acidic phospholipids. This chain is Chromosomal replication initiator protein DnaA, found in Shewanella sediminis (strain HAW-EB3).